The chain runs to 154 residues: uncharacterized protein (154 aa).

2 helical membrane passes run 19–39 (LFAYAAAFLIAVAHVAGGLLL) and 51–71 (ADQVAMGALGLVLAGAVLLFA).

The protein resides in the cell membrane. This is an uncharacterized protein from Mycobacterium tuberculosis (strain CDC 1551 / Oshkosh).